The sequence spans 514 residues: GTPase Obg (514 aa).

In terms of domain architecture, Obg spans 2–159; it reads ATFVDRVTVH…GDILLELKTV (158 aa). A disordered region spans residues 62-88; it reads RRPHRSSGNGGFGMGDHRSGHTGEDLE. Positions 76 to 85 are enriched in basic and acidic residues; the sequence is GDHRSGHTGE. Positions 160–336 constitute an OBG-type G domain; that stretch reads ADIALVGYPS…LSFALAELVE (177 aa). GTP-binding positions include 166 to 173, 191 to 195, 212 to 215, 288 to 291, and 317 to 319; these read GYPSAGKS, FTTLH, DVPG, NKID, and STV. Mg(2+) contacts are provided by S173 and T193. In terms of domain architecture, OCT spans 356–440; the sequence is PKTVDDSGFV…ENGVVFDWEP (85 aa).

The protein belongs to the TRAFAC class OBG-HflX-like GTPase superfamily. OBG GTPase family. Monomer. It depends on Mg(2+) as a cofactor.

The protein resides in the cytoplasm. An essential GTPase which binds GTP, GDP and possibly (p)ppGpp with moderate affinity, with high nucleotide exchange rates and a fairly low GTP hydrolysis rate. Plays a role in control of the cell cycle, stress response, ribosome biogenesis and in those bacteria that undergo differentiation, in morphogenesis control. The sequence is that of GTPase Obg from Leifsonia xyli subsp. xyli (strain CTCB07).